The primary structure comprises 390 residues: Protein phosphatase 1B (390 aa).

The span at 1–14 (MGAFLDKPKTEKHN) shows a compositional bias: basic and acidic residues. The tract at residues 1–20 (MGAFLDKPKTEKHNAHGAGN) is disordered. Gly-2 carries the N-myristoyl glycine lipid modification. A Glycyl lysine isopeptide (Lys-Gly) (interchain with G-Cter in ISG15) cross-link involves residue Lys-12. In terms of domain architecture, PPM-type phosphatase spans 23–295 (RYGLSSMQGW…DNMSIVLVCF (273 aa)). Residues Asp-60, Gly-61, Asp-243, and Asp-286 each contribute to the Mn(2+) site. Residues 371 to 390 (NPNKDNDGGAGDLEDSLVAL) are disordered. A Phosphoserine modification is found at Ser-386.

This sequence belongs to the PP2C family. Monomer. Interacts with PAK6. Interacts with the phosphorylated form of IKBKB/IKKB. It depends on Mg(2+) as a cofactor. Mn(2+) serves as cofactor. Isgylation negatively regulates its activity. Post-translationally, N-myristoylation is essential for the recognition of its substrates for dephosphorylation.

The protein resides in the cytoplasm. The protein localises to the cytosol. Its subcellular location is the membrane. The enzyme catalyses O-phospho-L-seryl-[protein] + H2O = L-seryl-[protein] + phosphate. It catalyses the reaction O-phospho-L-threonyl-[protein] + H2O = L-threonyl-[protein] + phosphate. Functionally, enzyme with a broad specificity. Dephosphorylates PRKAA1 and PRKAA2. Inhibits TBK1-mediated antiviral signaling by dephosphorylating it at 'Ser-172'. Plays an important role in the termination of TNF-alpha-mediated NF-kappa-B activation through dephosphorylating and inactivating IKBKB/IKKB. This chain is Protein phosphatase 1B (Ppm1b), found in Rattus norvegicus (Rat).